The following is a 180-amino-acid chain: ATP synthase subunit delta (180 aa).

Belongs to the ATPase delta chain family. F-type ATPases have 2 components, F(1) - the catalytic core - and F(0) - the membrane proton channel. F(1) has five subunits: alpha(3), beta(3), gamma(1), delta(1), epsilon(1). CF(0) has four main subunits: a(1), b(1), b'(1) and c(10-14). The alpha and beta chains form an alternating ring which encloses part of the gamma chain. F(1) is attached to F(0) by a central stalk formed by the gamma and epsilon chains, while a peripheral stalk is formed by the delta, b and b' chains.

Its subcellular location is the cellular thylakoid membrane. In terms of biological role, f(1)F(0) ATP synthase produces ATP from ADP in the presence of a proton or sodium gradient. F-type ATPases consist of two structural domains, F(1) containing the extramembraneous catalytic core and F(0) containing the membrane proton channel, linked together by a central stalk and a peripheral stalk. During catalysis, ATP synthesis in the catalytic domain of F(1) is coupled via a rotary mechanism of the central stalk subunits to proton translocation. Functionally, this protein is part of the stalk that links CF(0) to CF(1). It either transmits conformational changes from CF(0) to CF(1) or is implicated in proton conduction. This is ATP synthase subunit delta from Synechococcus elongatus (strain ATCC 33912 / PCC 7942 / FACHB-805) (Anacystis nidulans R2).